Reading from the N-terminus, the 484-residue chain is Adenylosuccinate lyase (484 aa).

The residue at position 2 (Ala-2) is an N-acetylalanine. Substrate-binding positions include 20–21 (RY), 85–87 (RHD), and 111–112 (TS). N6-acetyllysine is present on Lys-147. His-159 serves as the catalytic Proton donor/acceptor. Gln-241 serves as a coordination point for substrate. Ser-289 (proton donor/acceptor) is an active-site residue. N6-acetyllysine is present on Lys-295. Substrate contacts are provided by Arg-303, Arg-329, Ser-334, and Arg-338. A Glycyl lysine isopeptide (Lys-Gly) (interchain with G-Cter in SUMO1) cross-link involves residue Lys-415.

The protein belongs to the lyase 1 family. Adenylosuccinate lyase subfamily. In terms of assembly, homotetramer. Residues from neighboring subunits contribute catalytic and substrate-binding residues to each active site. As to expression, ubiquitously expressed. Both isoforms are produced by all tissues. Isoform 2 is 10-fold less abundant than isoform 1.

The catalysed reaction is N(6)-(1,2-dicarboxyethyl)-AMP = fumarate + AMP. The enzyme catalyses (2S)-2-[5-amino-1-(5-phospho-beta-D-ribosyl)imidazole-4-carboxamido]succinate = 5-amino-1-(5-phospho-beta-D-ribosyl)imidazole-4-carboxamide + fumarate. It functions in the pathway purine metabolism; AMP biosynthesis via de novo pathway; AMP from IMP: step 2/2. Its pathway is purine metabolism; IMP biosynthesis via de novo pathway; 5-amino-1-(5-phospho-D-ribosyl)imidazole-4-carboxamide from 5-amino-1-(5-phospho-D-ribosyl)imidazole-4-carboxylate: step 2/2. The enzyme reaction kinetics indicate cooperativity between subunits. Catalyzes two non-sequential steps in de novo AMP synthesis: converts (S)-2-(5-amino-1-(5-phospho-D-ribosyl)imidazole-4-carboxamido)succinate (SAICAR) to fumarate plus 5-amino-1-(5-phospho-D-ribosyl)imidazole-4-carboxamide, and thereby also contributes to de novo IMP synthesis, and converts succinyladenosine monophosphate (SAMP) to AMP and fumarate. This is Adenylosuccinate lyase (ADSL) from Homo sapiens (Human).